The primary structure comprises 254 residues: Metalloprotease YcaL (254 aa).

The first 19 residues, 1–19 (MKNTKLLLAIATSAALLTG), serve as a signal peptide directing secretion. A lipid anchor (N-palmitoyl cysteine) is attached at Cys20. The S-diacylglycerol cysteine moiety is linked to residue Cys20. Position 134 (His134) interacts with Zn(2+). Glu135 is a catalytic residue. His138 and Glu193 together coordinate Zn(2+). A disordered region spans residues 227–254 (GRTQSMFDSHPPSTERAQHIRDRIASGK). Residues 242–254 (RAQHIRDRIASGK) are compositionally biased toward basic and acidic residues.

The protein belongs to the peptidase M48B family. The cofactor is Zn(2+).

Its subcellular location is the cell inner membrane. Functionally, involved in the degradation of the LPS-assembly protein LptD. Degrades LptD that have engaged the Bam complex but are stalled at an early step in the outer membrane protein assembly process. The polypeptide is Metalloprotease YcaL (ycaL) (Escherichia coli (strain K12)).